The following is a 378-amino-acid chain: Homeobox protein Meis3 (378 aa).

The interval 24 to 57 (FSEAAPSVPRAPGPYTPHRPPQLQAPGLDSDSLK) is disordered. Pro residues predominate over residues 32 to 43 (PRAPGPYTPHRP). The MEIS N-terminal domain maps to 99-182 (GGDVCSSDSF…PIDLVIEDRD (84 aa)). Residues 203–265 (NTTWIRDHED…DEDLDLERRR (63 aa)) are disordered. A compositionally biased stretch (low complexity) spans 230 to 244 (SQSGDNSSDQGDGLD). Positions 265–327 (RNKKRGIFPK…NARRRIVQPM (63 aa)) form a DNA-binding region, homeobox; TALE-type.

Belongs to the TALE/MEIS homeobox family. Expressed at high levels in the brain. Significant expression also observed in the heart, spleen and lung. Expressed in pancreatic islets (beta-cells and non-beta-cells).

Its subcellular location is the nucleus. Its function is as follows. Transcriptional regulator which directly modulates PDPK1 expression, thus promoting survival of pancreatic beta-cells. Also regulates expression of NDFIP1, BNIP3, and CCNG1. This is Homeobox protein Meis3 (Meis3) from Mus musculus (Mouse).